The following is a 179-amino-acid chain: Peptide deformylase (179 aa).

Cys-103 and His-145 together coordinate Fe cation. Glu-146 is a catalytic residue. Residue His-149 participates in Fe cation binding.

The protein belongs to the polypeptide deformylase family. Fe(2+) serves as cofactor.

It carries out the reaction N-terminal N-formyl-L-methionyl-[peptide] + H2O = N-terminal L-methionyl-[peptide] + formate. Functionally, removes the formyl group from the N-terminal Met of newly synthesized proteins. Requires at least a dipeptide for an efficient rate of reaction. N-terminal L-methionine is a prerequisite for activity but the enzyme has broad specificity at other positions. In Leptospira biflexa serovar Patoc (strain Patoc 1 / Ames), this protein is Peptide deformylase.